The chain runs to 501 residues: Aspartyl/glutamyl-tRNA(Asn/Gln) amidotransferase subunit B (501 aa).

This sequence belongs to the GatB/GatE family. GatB subfamily. As to quaternary structure, heterotrimer of A, B and C subunits.

The enzyme catalyses L-glutamyl-tRNA(Gln) + L-glutamine + ATP + H2O = L-glutaminyl-tRNA(Gln) + L-glutamate + ADP + phosphate + H(+). It carries out the reaction L-aspartyl-tRNA(Asn) + L-glutamine + ATP + H2O = L-asparaginyl-tRNA(Asn) + L-glutamate + ADP + phosphate + 2 H(+). In terms of biological role, allows the formation of correctly charged Asn-tRNA(Asn) or Gln-tRNA(Gln) through the transamidation of misacylated Asp-tRNA(Asn) or Glu-tRNA(Gln) in organisms which lack either or both of asparaginyl-tRNA or glutaminyl-tRNA synthetases. The reaction takes place in the presence of glutamine and ATP through an activated phospho-Asp-tRNA(Asn) or phospho-Glu-tRNA(Gln). The sequence is that of Aspartyl/glutamyl-tRNA(Asn/Gln) amidotransferase subunit B from Agrobacterium fabrum (strain C58 / ATCC 33970) (Agrobacterium tumefaciens (strain C58)).